A 569-amino-acid polypeptide reads, in one-letter code: Mitochondrial import receptor subunit tomm-70 (569 aa).

Over 1 to 12 (MVETTGISDQTK) the chain is Mitochondrial intermembrane. A helical transmembrane segment spans residues 13-32 (KVLIGVAAAATVAGVGYLVY). Topologically, residues 33–569 (KSFGGSDLER…KRAAEMLDMY (537 aa)) are cytoplasmic. TPR repeat units lie at residues 44–77 (LEEI…AGPN), 119–152 (TKAY…DSSL), 221–254 (DQKQ…PPAM), and 510–544 (LHLL…APPR).

It belongs to the Tom70 family. In terms of assembly, forms part of the preprotein translocase complex of the outer mitochondrial membrane (TOM complex). As to expression, expressed in body wall muscle cells, the pharynx and structures in the tail.

Its subcellular location is the mitochondrion outer membrane. Functionally, receptor that accelerates the import of all mitochondrial precursor proteins. The sequence is that of Mitochondrial import receptor subunit tomm-70 from Caenorhabditis elegans.